The chain runs to 177 residues: Large ribosomal subunit protein uL6 (177 aa).

Belongs to the universal ribosomal protein uL6 family. As to quaternary structure, part of the 50S ribosomal subunit.

Functionally, this protein binds to the 23S rRNA, and is important in its secondary structure. It is located near the subunit interface in the base of the L7/L12 stalk, and near the tRNA binding site of the peptidyltransferase center. The polypeptide is Large ribosomal subunit protein uL6 (Beijerinckia indica subsp. indica (strain ATCC 9039 / DSM 1715 / NCIMB 8712)).